The following is a 543-amino-acid chain: Serine/threonine-protein kinase PkaA (543 aa).

The region spanning 8–276 (YLLEEPLGRG…ENLARGLRVV (269 aa)) is the Protein kinase domain. ATP is bound by residues 14–22 (LGRGATGTV) and Lys-48. The active-site Proton acceptor is the Asp-142. A disordered region spans residues 303-480 (PAPAQVPGAP…RQRSANPMRI (178 aa)). The span at 352 to 361 (VMPPVPPGQP) shows a compositional bias: pro residues. Composition is skewed to low complexity over residues 407 to 420 (RQVSRPPQQPRQAP) and 428 to 451 (PGYGYPQQQQPQRYATPQPQQPQR). Over residues 452–461 (YAPPPAPEPQ) the composition is skewed to pro residues.

The protein belongs to the protein kinase superfamily. Ser/Thr protein kinase family. Autophosphorylated mainly at Thr and slightly at Ser.

The enzyme catalyses L-seryl-[protein] + ATP = O-phospho-L-seryl-[protein] + ADP + H(+). It catalyses the reaction L-threonyl-[protein] + ATP = O-phospho-L-threonyl-[protein] + ADP + H(+). The polypeptide is Serine/threonine-protein kinase PkaA (pkaA) (Streptomyces coelicolor (strain ATCC BAA-471 / A3(2) / M145)).